The primary structure comprises 545 residues: Chaperonin GroEL 2 (545 aa).

ATP contacts are provided by residues 30–33 (TLGP), lysine 51, 87–91 (DGTTT), glycine 415, and aspartate 496.

Belongs to the chaperonin (HSP60) family. In terms of assembly, forms a cylinder of 14 subunits composed of two heptameric rings stacked back-to-back. Interacts with the co-chaperonin GroES.

Its subcellular location is the cytoplasm. The enzyme catalyses ATP + H2O + a folded polypeptide = ADP + phosphate + an unfolded polypeptide.. Functionally, together with its co-chaperonin GroES, plays an essential role in assisting protein folding. The GroEL-GroES system forms a nano-cage that allows encapsulation of the non-native substrate proteins and provides a physical environment optimized to promote and accelerate protein folding. This chain is Chaperonin GroEL 2, found in Nitrobacter winogradskyi (strain ATCC 25391 / DSM 10237 / CIP 104748 / NCIMB 11846 / Nb-255).